The chain runs to 234 residues: MGQKVNPHGLRVGVIKDWDAKWYANKRDFSDYLIEDHSIRKFVKKKLFLSGINKIETERAANNRVKINVHTAKPGMVIGKGGIGVEELRKELEKMTKKTVIVNVVEVKRPEVESQLVAENIAFSLERRVSFRRAMKQAMQRAMRAGAKGIKVSTAGRLGGADMARTEGYSEGNVPLHTLRADIDYGFAEADTTYGKLGIKVWIYKGEILPTKGKNEETNNETADNSRGRRREAK.

A KH type-2 domain is found at 39–108; it reads IRKFVKKKLF…TVIVNVVEVK (70 aa). Residues 212-234 are disordered; the sequence is KGKNEETNNETADNSRGRRREAK.

Belongs to the universal ribosomal protein uS3 family. As to quaternary structure, part of the 30S ribosomal subunit. Forms a tight complex with proteins S10 and S14.

Its function is as follows. Binds the lower part of the 30S subunit head. Binds mRNA in the 70S ribosome, positioning it for translation. The protein is Small ribosomal subunit protein uS3 of Alkaliphilus metalliredigens (strain QYMF).